A 487-amino-acid polypeptide reads, in one-letter code: NADH-quinone oxidoreductase subunit N (487 aa).

Transmembrane regions (helical) follow at residues 8–28, 35–55, 78–98, 104–124, 125–145, 159–179, 203–223, 235–255, 271–291, 297–317, 328–348, 376–396, 409–428, and 451–471; these read LIAM…MLSI, FINA…LYFV, GLVI…LVGY, EFYL…SANH, LASL…LIGY, YMLL…LLYA, ILAG…LVPF, PAPV…AVVM, LVLS…AISQ, LLGY…VAVQ, IGVY…VVSL, AVMT…GFIG, LWWL…YYYL, and ALTA…VLGI.

It belongs to the complex I subunit 2 family. As to quaternary structure, NDH-1 is composed of 13 different subunits. Subunits NuoA, H, J, K, L, M, N constitute the membrane sector of the complex.

It is found in the cell inner membrane. The enzyme catalyses a quinone + NADH + 5 H(+)(in) = a quinol + NAD(+) + 4 H(+)(out). In terms of biological role, NDH-1 shuttles electrons from NADH, via FMN and iron-sulfur (Fe-S) centers, to quinones in the respiratory chain. The immediate electron acceptor for the enzyme in this species is believed to be ubiquinone. Couples the redox reaction to proton translocation (for every two electrons transferred, four hydrogen ions are translocated across the cytoplasmic membrane), and thus conserves the redox energy in a proton gradient. This Yersinia pestis bv. Antiqua (strain Angola) protein is NADH-quinone oxidoreductase subunit N.